Here is a 265-residue protein sequence, read N- to C-terminus: Shikimate dehydrogenase (NADP(+)) (265 aa).

Residues 15 to 17 (SLS) and T62 each bind shikimate. K66 (proton acceptor) is an active-site residue. E78 contributes to the NADP(+) binding site. Shikimate contacts are provided by N87 and D102. NADP(+) is bound by residues 126–130 (GAGGV), 150–155 (NRTELK), and V210. Shikimate is bound at residue Y212. NADP(+) is bound at residue G233.

This sequence belongs to the shikimate dehydrogenase family. In terms of assembly, homodimer.

The catalysed reaction is shikimate + NADP(+) = 3-dehydroshikimate + NADPH + H(+). It participates in metabolic intermediate biosynthesis; chorismate biosynthesis; chorismate from D-erythrose 4-phosphate and phosphoenolpyruvate: step 4/7. In terms of biological role, involved in the biosynthesis of the chorismate, which leads to the biosynthesis of aromatic amino acids. Catalyzes the reversible NADPH linked reduction of 3-dehydroshikimate (DHSA) to yield shikimate (SA). The protein is Shikimate dehydrogenase (NADP(+)) of Pelagibacter ubique (strain HTCC1062).